The primary structure comprises 1114 residues: Structural maintenance of chromosomes protein 6 (1114 aa).

The disordered stretch occupies residues 26–64 (QENEEQQQQRKRRRHQFAPMTQFNSNTLDEDSGFRSSSD). The short motif at 35–39 (RKRRR) is the Nuclear localization signal element. 109-116 (GNNGSGKS) is an ATP binding site. Residues 259–529 (ASAIHDSAQE…TIEQRKNEFE (271 aa)) adopt a coiled-coil conformation. The segment at 530 to 695 (TPAIGPLGSL…IRLKVNSSSD (166 aa)) is flexible hinge. The stretch at 696-969 (NGTQYLKDLI…RDQNYKNAEK (274 aa)) forms a coiled coil.

It belongs to the SMC family. SMC6 subfamily. Component of the Smc5-Smc6 complex which consists of KRE29, MMS21, NSE1, NSE3, NSE4, NSE5, SMC5 and SMC6.

The protein localises to the nucleus. The protein resides in the chromosome. In terms of biological role, acts in a DNA repair pathway for removal of UV-induced DNA damage that is distinct from classical nucleotide excision repair and in repair of ionizing radiation damage. Functions in homologous recombination repair of DNA double strand breaks and in recovery of stalled replication forks. Probably plays a role in structure. This is Structural maintenance of chromosomes protein 6 (SMC6) from Saccharomyces cerevisiae (strain ATCC 204508 / S288c) (Baker's yeast).